The sequence spans 522 residues: Target of rapamycin complex 2 subunit MAPKAP1 (522 aa).

The residue at position 2 (Ala2) is an N-acetylalanine. The interaction with MAP3K2 stretch occupies residues 2 to 184; the sequence is AFLDNPTIIL…KKIDVYLPLH (183 aa). An interaction with NBN region spans residues 2 to 267; it reads AFLDNPTIIL…GFSTLALVEK (266 aa). Residue Thr86 is modified to Phosphothreonine. A phosphoserine mark is found at Ser128, Ser186, Ser315, and Ser356. Residues 139-267 enclose the CRIM domain; sequence QSILSVRLEQ…GFSTLALVEK (129 aa). Residues 279–353 are SIN1-type RBD; that stretch reads LFVRINAAHG…QSAWEFCQVR (75 aa). One can recognise an SIN1-type PH domain in the interval 382–487; it reads HYKSFKVSMI…IVLKVNYILE (106 aa). A 1,2-diacyl-sn-glycero-3-phospho-(1D-myo-inositol-3,4,5-trisphosphate) is bound at residue Arg393. Phosphothreonine is present on Thr398. Lys428 and Lys464 together coordinate a 1,2-diacyl-sn-glycero-3-phospho-(1D-myo-inositol-3,4,5-trisphosphate). The tract at residues 468-522 is interaction with ATF2; it reads FESDAATVNEIVLKVNYILESRASTARADYFAQKQRKLNRRTSFSFQKEKKSGQQ. Ser510 carries the post-translational modification Phosphoserine.

This sequence belongs to the SIN1 family. In terms of assembly, component of the mechanistic target of rapamycin complex 2 (mTORC2), consisting in two heterotretramers composed of MTOR, MLST8, RICTOR and MAPKAP1/SIN1. The mTORC2 core complex associates with PRR5/PROTOR1 and/or PRR5L/PROTOR2. Contrary to mTORC1, mTORC2 does not bind to and is not sensitive to FKBP12-rapamycin. Interacts with MAP3K2. Interacts with ATF2. Interacts with MAPK8. Interacts with GTP-bound HRAS and KRAS; inhibiting their activity. Interacts with IFNAR2. Phosphorylation at Ser-128 by PKC promotes relocalization to the perinuclear region, where the mTORC2 complex specifically mediates phosphorylation of SGK1. Phosphorylated at Thr-86 by AKT1 or RPS6KB1 in the presence of growth factors; the effect of this phosphorylation is however unclear. According to two studies, phosphorylation at Thr-86 by AKT1 is part of a positive feedback loop that increases mTORC2 activation. According to another study, phosphorylation at Thr-86 and Thr-398 by RPS6KB1 promotes dissociation from the mTORC2 complex, leading to inhibit mTORC2 signaling.

Its subcellular location is the cell membrane. The protein localises to the endoplasmic reticulum membrane. It is found in the early endosome membrane. It localises to the late endosome membrane. The protein resides in the lysosome membrane. Its subcellular location is the golgi apparatus membrane. The protein localises to the mitochondrion outer membrane. It is found in the cytoplasm. It localises to the perinuclear region. The protein resides in the nucleus. With respect to regulation, phosphatidylinositol 3,4,5-trisphosphate (PI(3,4,5)P3) promotes MTOR activation by relieving MAPKAP1/SIN1-mediated inhibition of MTOR that takes place in absence of PI(3,4,5)P3. Functionally, component of the mechanistic target of rapamycin complex 2 (mTORC2), which transduces signals from growth factors to pathways involved in proliferation, cytoskeletal organization, lipogenesis and anabolic output. In response to growth factors, mTORC2 phosphorylates and activates AGC protein kinase family members, including AKT (AKT1, AKT2 and AKT3), PKC (PRKCA, PRKCB and PRKCE) and SGK1. In contrast to mTORC1, mTORC2 is nutrient-insensitive. Within the mTORC2 complex, MAPKAP1/SIN1 acts as a substrate adapter which recognizes and binds AGC protein kinase family members for phosphorylation by MTOR. mTORC2 plays a critical role in AKT1 activation by mediating phosphorylation of different sites depending on the context, such as 'Thr-450', 'Ser-473', 'Ser-477' or 'Thr-479', facilitating the phosphorylation of the activation loop of AKT1 on 'Thr-308' by PDPK1/PDK1 which is a prerequisite for full activation. mTORC2 catalyzes the phosphorylation of SGK1 at 'Ser-422' and of PRKCA on 'Ser-657'. The mTORC2 complex also phosphorylates various proteins involved in insulin signaling, such as FBXW8 and IGF2BP1. mTORC2 acts upstream of Rho GTPases to regulate the actin cytoskeleton, probably by activating one or more Rho-type guanine nucleotide exchange factors. mTORC2 promotes the serum-induced formation of stress-fibers or F-actin. MAPKAP1 inhibits MAP3K2 by preventing its dimerization and autophosphorylation. Inhibits HRAS and KRAS independently of mTORC2 complex. Enhances osmotic stress-induced phosphorylation of ATF2 and ATF2-mediated transcription. Involved in ciliogenesis, regulates cilia length through its interaction with CCDC28B independently of mTORC2 complex. This chain is Target of rapamycin complex 2 subunit MAPKAP1 (MAPKAP1), found in Pongo abelii (Sumatran orangutan).